A 347-amino-acid chain; its full sequence is Probable arabinogalactan endo-beta-1,4-galactanase A (347 aa).

Residues 1 to 16 (MLFSYLLATLPLLANA) form the signal peptide. The active-site Proton donor is the Glu-150. Glu-260 serves as the catalytic Nucleophile.

Belongs to the glycosyl hydrolase 53 family.

It localises to the secreted. It catalyses the reaction The enzyme specifically hydrolyzes (1-&gt;4)-beta-D-galactosidic linkages in type I arabinogalactans.. Functionally, endogalactanase involved in the degradation of plant cell wall polysaccharides, and more particularly of hairy regions of pectin. The polypeptide is Probable arabinogalactan endo-beta-1,4-galactanase A (galA) (Aspergillus oryzae (strain ATCC 42149 / RIB 40) (Yellow koji mold)).